The primary structure comprises 352 residues: Histidine protein kinase SaeS (352 aa).

The next 2 membrane-spanning stretches (helical) occupy residues 9-29 (QIIIGVISSVILTTIILVIAY) and 41-61 (TLAITTMITSCLTLSICSIFI). In terms of domain architecture, Histidine kinase spans 130–349 (NLAHDLKTPL…TMTLTLKKFQ (220 aa)). A Phosphohistidine; by autocatalysis modification is found at H133.

In terms of processing, autophosphorylated.

It localises to the cell membrane. It carries out the reaction ATP + protein L-histidine = ADP + protein N-phospho-L-histidine.. Its function is as follows. Member of the two-component regulatory system SaeR/SaeS. Probably functions as a membrane-associated protein kinase that upon sensing the appropriate signal, autophosphorylates and in turn activates the cytosolic response regulator SaeR. In Staphylococcus epidermidis (strain ATCC 35984 / DSM 28319 / BCRC 17069 / CCUG 31568 / BM 3577 / RP62A), this protein is Histidine protein kinase SaeS (saeS).